The following is a 133-amino-acid chain: Fatty acid-binding protein, heart (133 aa).

Position 2 is an N-acetylalanine (alanine 2). Threonine 8 is modified (phosphothreonine). Residue tyrosine 20 is modified to Phosphotyrosine; by Tyr-kinases. Serine 23 carries the post-translational modification Phosphoserine. At threonine 30 the chain carries Phosphothreonine. Phosphoserine is present on serine 83. Position 127 to 129 (127 to 129 (RTY)) interacts with (9Z)-octadecenoate. 127–129 (RTY) serves as a coordination point for hexadecanoate. 127 to 129 (RTY) provides a ligand contact to octadecanoate.

Belongs to the calycin superfamily. Fatty-acid binding protein (FABP) family.

The protein resides in the cytoplasm. FABPs are thought to play a role in the intracellular transport of long-chain fatty acids and their acyl-CoA esters. FABPs are important elements related to the hibernating state in mammals. The chain is Fatty acid-binding protein, heart (FABP3) from Myotis lucifugus (Little brown bat).